The primary structure comprises 236 residues: Phosphoribosylaminoimidazole-succinocarboxamide synthase (236 aa).

It belongs to the SAICAR synthetase family.

It carries out the reaction 5-amino-1-(5-phospho-D-ribosyl)imidazole-4-carboxylate + L-aspartate + ATP = (2S)-2-[5-amino-1-(5-phospho-beta-D-ribosyl)imidazole-4-carboxamido]succinate + ADP + phosphate + 2 H(+). Its pathway is purine metabolism; IMP biosynthesis via de novo pathway; 5-amino-1-(5-phospho-D-ribosyl)imidazole-4-carboxamide from 5-amino-1-(5-phospho-D-ribosyl)imidazole-4-carboxylate: step 1/2. This Pseudomonas entomophila (strain L48) protein is Phosphoribosylaminoimidazole-succinocarboxamide synthase.